A 251-amino-acid polypeptide reads, in one-letter code: Leucine-rich repeat and calponin homology domain-containing protein 1 (251 aa).

Residues 73–97 (SNGSEYSPNEIRANSPAISPTANST) are disordered. Residues serine 87 and serine 91 each carry the phosphoserine modification. Positions 88–97 (PAISPTANST) are enriched in polar residues. Threonine 123 carries the post-translational modification Phosphothreonine. The region spanning 131–244 (MREEKELVEH…ITVQALLDVT (114 aa)) is the Calponin-homology (CH) domain.

Interacts (via LRR repeats) with unphosphorylated DOCK8 (via DHR-2 domain); the interaction prevents the interaction between DOCK8 and CDC42.

It localises to the cytoplasm. Acts as a negative regulator of GTPase CDC42 by sequestering CDC42-guanine exchange factor DOCK8. Probably by preventing CDC42 activation, negatively regulates CD4(+) T-cell migration. The polypeptide is Leucine-rich repeat and calponin homology domain-containing protein 1 (Felis catus (Cat)).